We begin with the raw amino-acid sequence, 523 residues long: Calcium-dependent protein kinase 28 (523 aa).

The N-myristoyl glycine moiety is linked to residue Gly-2. Cys-4 carries the S-palmitoyl cysteine lipid modification. The tract at residues 15-43 (SSRRSSQTKSKAAPTPIDTKASTKRRTGS) is disordered. In terms of domain architecture, Protein kinase spans 62–322 (YTIGKLLGHG…AAQALSHAWV (261 aa)). ATP-binding positions include 68–76 (LGHGQFGYT) and Lys-91. Asp-188 serves as the catalytic Proton acceptor. Phosphoserine occurs at positions 228 and 318. Residues 328 to 358 (ATDIPVDISVLNNLRQFVRYSRLKQFALRAL) form an autoinhibitory domain region. EF-hand domains follow at residues 365 to 400 (AEISDLRDQFDAIDVDKNGVISLEEMRQALAKDLPW), 402 to 437 (LKDSRVAEILEAIDSNTDGLVDFTEFVAAALHVHQL), 444 to 479 (KWQLRSRAAFEKFDLDKDGYITPEELRMHTGLRGSI), and 482 to 509 (LLDEADIDRDGKISLHEFRRLLRTASIS). Residues Asp-378, Asp-380, Asn-382, Glu-389, Asp-415, Asn-417, Asp-419, Glu-426, Asp-457, Asp-459, Asp-461, Tyr-463, Glu-468, Asp-487, Asp-489, Asp-491, and Lys-493 each coordinate Ca(2+). Ser-495 bears the Phosphoserine mark. Glu-498 provides a ligand contact to Ca(2+). Ser-515 carries the phosphoserine modification.

Belongs to the protein kinase superfamily. Ser/Thr protein kinase family. CDPK subfamily. Interacts with BIK1. Expressed in vascular and meristematic tissues throughout plant development.

It localises to the cell membrane. The enzyme catalyses L-seryl-[protein] + ATP = O-phospho-L-seryl-[protein] + ADP + H(+). The catalysed reaction is L-threonyl-[protein] + ATP = O-phospho-L-threonyl-[protein] + ADP + H(+). Activated by calcium. Autophosphorylation plays an important role in the regulation of the kinase activity. May play a role in signal transduction pathways that involve calcium as a second messenger. Acts as a developmentally controlled regulator for coordinated stem elongation and vascular development. Acts as a key component which contributes to the developmental switch that establishes the transition from vegetative to reproductive growth. Involved in pathogen-associated molecular pattern (PAMP)-triggered immunity (PTI) signaling. Interacts with and phosphorylates the kinase BIK1, a central rate-limiting kinase in PTI signaling. Facilitates BIK1 turnover and negatively regulates BIK1-mediated immune responses triggered by several PAMPs. Its kinase activity is necessary and sufficient for its function in PTI signaling. This is Calcium-dependent protein kinase 28 from Arabidopsis thaliana (Mouse-ear cress).